We begin with the raw amino-acid sequence, 3425 residues long: Genome polyprotein (3425 aa).

Residues 3–16 (NKKPGRPGSGRVVN) are interaction with host EXOC1. The hydrophobic; homodimerization of capsid protein C stretch occupies residues 38-73 (VLRGAGPIRFVLALLTFFKFTALRPTIGMLKRWKLV). A propeptide spans 105–120 (GGSCSWIIMLLPIVAG) (ER anchor for the capsid protein C, removed in mature form by serine protease NS3). A helical transmembrane segment spans residues 105–125 (GGSCSWIIMLLPIVAGLKLGN). Asn135 carries an N-linked (GlcNAc...) asparagine; by host glycan. 2 consecutive transmembrane segments (helical) span residues 247 to 267 (WALR…NLGT) and 273 to 293 (IIFT…CLGM). 6 disulfides stabilise this stretch: Cys290-Cys317, Cys347-Cys403, Cys361-Cys392, Cys379-Cys408, Cys477-Cys575, and Cys592-Cys623. Residues 385 to 398 (DRGWGNGCGLFGKG) are fusion peptide. A run of 2 helical transmembrane segments spans residues 740–760 (LFGG…LWMG) and 768–788 (ISMT…NVNA). Cys792 and Cys803 are joined by a disulfide. Residues Asn918, Asn963, and Asn995 are each glycosylated (N-linked (GlcNAc...) asparagine; by host). Cystine bridges form between Cys967–Cys1011, Cys1068–Cys1117, Cys1079–Cys1100, and Cys1101–Cys1104. 7 consecutive transmembrane segments (helical) span residues 1138 to 1158 (VMAF…VMIV), 1169 to 1189 (TAPI…FGGI), 1214 to 1234 (IVHL…IGFL), 1290 to 1310 (FALP…IDVV), 1337 to 1357 (MLLG…FAGL), 1369 to 1389 (WPVS…GGIA), and 1395 to 1415 (SMAI…VTGF). The segment at 1421–1460 (LEKASDISWSEEARVTGASQRFDVEIDQDGNMRLLNDPGV) is interacts with and activates NS3 protease. Positions 1499–1676 (GGVIWDVPAP…EKKEEEVPQV (178 aa)) constitute a Peptidase S7 domain. Catalysis depends on charge relay system; for serine protease NS3 activity residues His1549, Asp1573, and Ser1633. In terms of domain architecture, Helicase ATP-binding spans 1679 to 1835 (ENMLRKRQLT…DSNSPITDIE (157 aa)). The segment at 1683 to 1686 (RKRQ) is important for RNA-binding. 1692 to 1699 (LHPGSGKT) contacts ATP. A DEAH box motif is present at residues 1783–1786 (DEAH). A Helicase C-terminal domain is found at 1845–2011 (SGYEWITDFQ…GLVAQLYGPE (167 aa)). Residues 2162–2166 (EELPE) are regulates the ATPase activity of NS3 helicase. The next 8 membrane-spanning stretches (helical) occupy residues 2169–2189 (ETFL…LFFV), 2194–2214 (LGKT…LWIA), 2216–2236 (VPAQ…IVLI), 2252–2272 (VFMI…MGWL), 2306–2326 (AWAA…HLII), 2334–2354 (LMAM…MPFV), 2371–2391 (FTMT…AFLV), and 2441–2461 (CVLV…LTLT). An mRNA cap 0-1 NS5-type MT domain is found at 2521-2786 (GGGTGRTLGE…DVDLGSGTRA (266 aa)). Ser2576 contributes to the S-adenosyl-L-methionine binding site. Ser2576 carries the post-translational modification Phosphoserine. Lys2581 (for 2'-O-MTase activity) is an active-site residue. Residues Gly2606, Trp2607, Thr2624, Lys2625, and Val2652 each contribute to the S-adenosyl-L-methionine site. Asp2666 (for 2'-O-MTase activity) is an active-site residue. Ile2667 provides a ligand contact to S-adenosyl-L-methionine. Active-site for 2'-O-MTase activity residues include Lys2702 and Glu2738. Tyr2740 lines the S-adenosyl-L-methionine pocket. Residues Glu2960, His2964, Cys2969, and Cys2972 each contribute to the Zn(2+) site. The region spanning 3050–3202 (GLMYADDTAG…KPADDRFATA (153 aa)) is the RdRp catalytic domain. Residues His3237, Cys3253, and Cys3372 each coordinate Zn(2+). A PDZ-binding motif is present at residues 3423–3425 (GVL).

This sequence in the N-terminal section; belongs to the class I-like SAM-binding methyltransferase superfamily. mRNA cap 0-1 NS5-type methyltransferase family. As to quaternary structure, homodimer. In terms of assembly, forms heterodimers with envelope protein E in the endoplasmic reticulum and Golgi. Homodimer; in the endoplasmic reticulum and Golgi. Interacts with protein prM. Interacts with non-structural protein 1. As to quaternary structure, homodimer; Homohexamer when secreted. Interacts with envelope protein E. NS1 interacts with NS4B. Interacts with host MAVS (via C-terminus); this interaction blocks the interaction of MAVS with RIGI or IFIH1/MDA5. In terms of assembly, interacts (via N-terminus) with serine protease NS3. Forms a heterodimer with serine protease NS3. May form homooligomers. As to quaternary structure, forms a heterodimer with NS2B. Interacts with non-structural protein 2A (via N-terminus). Interacts with NS4B. Interacts with unphosphorylated RNA-directed RNA polymerase NS5; this interaction stimulates RNA-directed RNA polymerase NS5 guanylyltransferase activity. In terms of assembly, interacts with serine protease NS3. Homodimer. In terms of processing, specific enzymatic cleavages in vivo yield mature proteins. Cleavages in the lumen of endoplasmic reticulum are performed by host signal peptidase, whereas cleavages in the cytoplasmic side are performed by serine protease NS3. Signal cleavage at the 2K-4B site requires a prior NS3 protease-mediated cleavage at the 4A-2K site. Both NS2A and NS2B proteins are required in cis for NS2A/2B proteolytic processing. Post-translationally, cleaved in post-Golgi vesicles by a host furin, releasing the mature small envelope protein M, and peptide pr. This cleavage is incomplete as up to 30% of viral particles still carry uncleaved prM. N-glycosylated. In terms of processing, N-glycosylated. The excreted form is glycosylated and this is required for efficient secretion of the protein from infected cells. Post-translationally, phosphorylated on serines residues. This phosphorylation may trigger NS5 nuclear localization.

It localises to the virion. It is found in the host nucleus. The protein localises to the host cytoplasm. The protein resides in the host perinuclear region. Its subcellular location is the secreted. It localises to the virion membrane. It is found in the host endoplasmic reticulum membrane. It carries out the reaction Selective hydrolysis of -Xaa-Xaa-|-Yaa- bonds in which each of the Xaa can be either Arg or Lys and Yaa can be either Ser or Ala.. It catalyses the reaction RNA(n) + a ribonucleoside 5'-triphosphate = RNA(n+1) + diphosphate. The catalysed reaction is a ribonucleoside 5'-triphosphate + H2O = a ribonucleoside 5'-diphosphate + phosphate + H(+). The enzyme catalyses ATP + H2O = ADP + phosphate + H(+). It carries out the reaction a 5'-end (5'-triphosphoguanosine)-ribonucleoside in mRNA + S-adenosyl-L-methionine = a 5'-end (N(7)-methyl 5'-triphosphoguanosine)-ribonucleoside in mRNA + S-adenosyl-L-homocysteine. It catalyses the reaction a 5'-end (N(7)-methyl 5'-triphosphoguanosine)-ribonucleoside in mRNA + S-adenosyl-L-methionine = a 5'-end (N(7)-methyl 5'-triphosphoguanosine)-(2'-O-methyl-ribonucleoside) in mRNA + S-adenosyl-L-homocysteine + H(+). In terms of biological role, capsid protein self-assembles to form an icosahedral capsid about 40 nm in diameter. Plays a role in virus budding by binding to the cell membrane and gathering the viral RNA into a nucleocapsid that forms the core of a mature virus particle. Its function is as follows. Prevents premature fusion activity of envelope proteins in trans-Golgi by binding to envelope protein E at pH6.0. After virion release in extracellular space, gets dissociated from E dimers. Acts as a chaperone for envelope protein E during intracellular virion assembly by masking and inactivating envelope protein E fusion peptide. prM is the only viral peptide matured by host furin in the trans-Golgi network probably to avoid catastrophic activation of the viral fusion activity in acidic Golgi compartment prior to virion release. prM-E cleavage is inefficient, and many virions are only partially matured. These uncleaved prM would play a role in immune evasion. Functionally, may play a role in virus budding. Exerts cytotoxic effects by activating a mitochondrial apoptotic pathway through M ectodomain. May display a viroporin activity. In terms of biological role, binds to host cell surface receptor and mediates fusion between viral and cellular membranes. Envelope protein is synthesized in the endoplasmic reticulum in the form of heterodimer with protein prM. They play a role in virion budding in the ER, and the newly formed immature particle is covered with 60 spikes composed of heterodimer between precursor prM and envelope protein E. The virion is transported to the Golgi apparatus where the low pH causes dissociation of PrM-E heterodimers and formation of E homodimers. Its function is as follows. Involved in immune evasion, pathogenesis and viral replication. Interacts with host MAVS and blocks MAVS binding to RIGI or IFIH1/MDA5, thereby leading to evasion of the innate immune response. Once cleaved off the polyprotein, is targeted to three destinations: the viral replication cycle, the plasma membrane and the extracellular compartment. Essential for viral replication. Required for formation of the replication complex and recruitment of other non-structural proteins to the ER-derived membrane structures. Excreted as a hexameric lipoparticle that plays a role against host immune response. Component of the viral RNA replication complex that functions in virion assembly. Functionally, required cofactor for the serine protease function of NS3. May have membrane-destabilizing activity and form viroporins. In terms of biological role, displays three enzymatic activities: serine protease, NTPase and RNA helicase. NS3 serine protease, in association with NS2B, performs its autocleavage and cleaves the polyprotein at dibasic sites in the cytoplasm: C-prM, NS2A-NS2B, NS2B-NS3, NS3-NS4A, NS4A-2K and NS4B-NS5. NS3 RNA helicase binds RNA and unwinds dsRNA in the 3' to 5' direction. Its function is as follows. Regulates the ATPase activity of the NS3 helicase activity. NS4A allows NS3 helicase to conserve energy during unwinding. Functions as a signal peptide for NS4B. Functionally, induces the formation of ER-derived membrane vesicles where the viral replication takes place. In terms of biological role, replicates the viral (+) and (-) RNA genome, and performs the capping of genomes in the cytoplasm. NS5 methylates viral RNA cap at guanine N-7 and ribose 2'-O positions. The protein is Genome polyprotein of Anas (ducks).